The sequence spans 430 residues: Protein POLLENLESS 3-LIKE 2 (430 aa).

Positions 1–21 (MMRDVFRPTKSAPCSPAKPLG) are disordered. TPR repeat units lie at residues 40–73 (DSPY…GDRV), 74–107 (DSAL…CSDQ), 110–143 (ESLD…IQKG), 170–203 (TRLL…APDN), 205–236 (KMCN…VVDG), and 238–257 (RGVD…LNDL). Positions 81–107 (AIVMKQQNRAEEAIEAIKSLRVRCSDQ) form a coiled coil. Positions 346-376 (KLKRTRSSSQGMGMLSGIGGDHEGETNTSTR) are disordered.

This sequence belongs to the MS5 protein family.

The protein resides in the nucleus. Functionally, probably involved in the regulation of cell division. The protein is Protein POLLENLESS 3-LIKE 2 of Arabidopsis thaliana (Mouse-ear cress).